We begin with the raw amino-acid sequence, 122 residues long: uncharacterized protein (122 aa).

The protein belongs to the phage O protein family.

This is an uncharacterized protein from Escherichia coli O6:H1 (strain CFT073 / ATCC 700928 / UPEC).